The chain runs to 836 residues: Protein O-mannosyl-transferase TMTC2 (836 aa).

The helical transmembrane segment at 1–21 (MIAELVSSALGLALYLNTLSA) threads the bilayer. The Extracellular portion of the chain corresponds to 22-77 (DFCYDDSRAIKTNQDLLPETPWTHIFYNDFWGTLLTHSGSHKSYRPLCTLSFRLNH). The helical transmembrane segment at 78 to 98 (AIGGLNPWSYHLVNVLLHAAV) threads the bilayer. At 99–107 (TGLFTRFSK) the chain is on the cytoplasmic side. The helical transmembrane segment at 108-128 (ALLGDGYWTFMAGLMFASHPI) threads the bilayer. Residues 129–132 (HTEA) are Extracellular-facing. A helical membrane pass occupies residues 133–153 (VAGIVGRADVGASLFFLLSLL). Over 154-168 (CYIKHCSTRGYSART) the chain is Cytoplasmic. 2 helical membrane-spanning segments follow: residues 169-184 (WGWFLGTGLCAGCSML) and 185-204 (WKEQGVTVLAVSAVYDVFVF). The Cytoplasmic portion of the chain corresponds to 205-220 (HRLKMKQILPTIYKRK). The helical transmembrane segment at 221-241 (NLSLFLSISLLTFWGTCLLGA) threads the bilayer. The Extracellular segment spans residues 242 to 312 (RLYWMGNKPP…KTVCDWRNLH (71 aa)). The helical transmembrane segment at 313–333 (TVAFYSGLLLLAYCGLKNPSL) threads the bilayer. Over 334-392 (EGECNGKALTNGKQNANGHSCHSDVEYRNSEMKPSFASKVENGIKNCVPQRTQLPSTEN) the chain is Cytoplasmic. Residues 393 to 415 (IVILSLSLLIIPFIPATNLFFYV) traverse the membrane as a helical segment. At 416 to 422 (GFVIAER) the chain is on the extracellular side. Residues 423–443 (VLYIPSMGFCLLITVGARALY) traverse the membrane as a helical segment. At 444–449 (VKVQKR) the chain is on the cytoplasmic side. A helical transmembrane segment spans residues 450–470 (FLKSLVFYATATLIVFYGVKT). Over 471-836 (AIRNGDWQNE…EKQGLKTSKT (366 aa)) the chain is Extracellular. TPR repeat units follow at residues 493-526 (AKAWGNLGNVLKSQSKISEAESAYRNALFYRSNM), 527-560 (ADMLYNLGLLLQENSRFAEALHYYKLAIGSRPTL), 561-594 (ASAYLNTGIILMNQGKTEEARRTFLKCSEIPDEN), 606-639 (TSCLYNLGKLYHEQGRYEEALSVYREAIQKMPRH), 643-676 (QSLYNMMGEAYMRLSKLPEAEHWYMESLRSKTDH), 677-710 (IPAHLTYGKLLALTGRKSEAEKFFLKAIELDPTK), 711-744 (GNCYMHYGQFLLEESRLTEAAEMAKKAAELDNTE), 745-778 (FDVVFNAAHMLRQASLNEAAEKYYDLAARLRPNY), and 779-812 (PAALMNLGAILHLNGRLQKAEANYLRALQLKPDD).

It belongs to the TMTC family.

The protein localises to the membrane. Its subcellular location is the endoplasmic reticulum. It catalyses the reaction a di-trans,poly-cis-dolichyl beta-D-mannosyl phosphate + L-seryl-[protein] = 3-O-(alpha-D-mannosyl)-L-seryl-[protein] + a di-trans,poly-cis-dolichyl phosphate + H(+). The catalysed reaction is a di-trans,poly-cis-dolichyl beta-D-mannosyl phosphate + L-threonyl-[protein] = 3-O-(alpha-D-mannosyl)-L-threonyl-[protein] + a di-trans,poly-cis-dolichyl phosphate + H(+). Its pathway is protein modification; protein glycosylation. Functionally, transfers mannosyl residues to the hydroxyl group of serine or threonine residues. The 4 members of the TMTC family are O-mannosyl-transferases dedicated primarily to the cadherin superfamily, each member seems to have a distinct role in decorating the cadherin domains with O-linked mannose glycans at specific regions. Also acts as O-mannosyl-transferase on other proteins such as PDIA3. The sequence is that of Protein O-mannosyl-transferase TMTC2 from Mus musculus (Mouse).